Reading from the N-terminus, the 80-residue chain is uncharacterized protein (80 aa).

To B.cereus similar ORF in glnR 5'region.

This is an uncharacterized protein from Bacillus cereus.